The sequence spans 662 residues: Pro-neuregulin-1, membrane-bound isoform (662 aa).

A propeptide spanning residues 1–13 (MSERKEGRGKGKG) is cleaved from the precursor. The tract at residues 1–52 (MSERKEGRGKGKGKKKDRGSRGKPGPAEGDPSPALPPRLKEMKSQESAAGSK) is disordered. The Extracellular portion of the chain corresponds to 14–265 (KKKDRGSRGK…SKAEELYQKR (252 aa)). The region spanning 37–128 (PRLKEMKSQE…GNDSASANIT (92 aa)) is the Ig-like C2-type domain. An intrachain disulfide couples C57 to C112. 3 N-linked (GlcNAc...) asparagine glycosylation sites follow: N120, N126, and N164. Residues 178–222 (HLIKCAEKEKTFCVNGGECFTVKDLSNPSRYLCKCPNEFTGDRCQ) form the EGF-like domain. Intrachain disulfides connect C182-C196, C190-C210, and C212-C221. A helical transmembrane segment spans residues 266–288 (VLTITGICIALLVVGIMCVVAYC). Topologically, residues 289-662 (KTKKQRQKLH…VIANQDPIAV (374 aa)) are cytoplasmic. Residues 358 to 373 (SHYTSTAHHSTTVTQT) are compositionally biased toward low complexity. 3 disordered regions span residues 358–383 (SHYTSTAHHSTTVTQTPSHSWSNGHT), 398–480 (SVEN…PVSS), and 547–610 (YETT…DTPF). Over residues 374-383 (PSHSWSNGHT) the composition is skewed to polar residues. A compositionally biased stretch (gly residues) spans 410-420 (GPRGRLHGLGG). The span at 425–445 (SFLRHARETPDSYRDSPHSER) shows a compositional bias: basic and acidic residues. Basic residues predominate over residues 564 to 574 (TNSRRAKRTKP). Residues 585 to 596 (DSNTSSVSSNSE) are compositionally biased toward low complexity.

Belongs to the neuregulin family. The cytoplasmic domain interacts with the LIM domain region of LIMK1. Forms a ternary complex with ERBB3 and ITGAV:ITGB3 or ITGA6:ITGB4. Interacts with NRDC and BACE1. In terms of processing, proteolytic cleavage close to the plasma membrane on the external face leads to the release of the soluble growth factor form. Post-translationally, N- and O-glycosylated. Extensive glycosylation precedes the proteolytic cleavage. In terms of tissue distribution, widely expressed. Most tissues contain isoform alpha2A and isoform alpha2B. Isoform Alpha2 and isoform beta2 are the predominant forms in mesenchymal and non-neuronal organs. Isoform Beta1 is enriched in brain and spinal cord, but not in muscle and heart. Isoform Alpha2C is highly expressed in spinal cord, moderately in lung, brain, ovary, and stomach, in low amounts in the kidney, skin and heart and not detected in the liver, spleen, and placenta.

It localises to the cell membrane. It is found in the secreted. Functionally, direct ligand for ERBB3 and ERBB4 tyrosine kinase receptors. Concomitantly recruits ERBB1 and ERBB2 coreceptors, resulting in ligand-stimulated tyrosine phosphorylation and activation of the ERBB receptors. The multiple isoforms perform diverse functions such as inducing growth and differentiation of epithelial, glial, neuronal, and skeletal muscle cells; inducing expression of acetylcholine receptor in synaptic vesicles during the formation of the neuromuscular junction; stimulating lobuloalveolar budding and milk production in the mammary gland and inducing differentiation of mammary tumor cells; stimulating Schwann cell proliferation; implication in the development of the myocardium such as trabeculation of the developing heart. Binds to ERBB4 and ERBB3. Acts as a ligand for integrins and binds (via EGF domain) to integrins ITGAV:ITGB3 or ITGA6:ITGB4. Its binding to integrins and subsequent ternary complex formation with integrins and ERRB3 are essential for NRG1-ERBB signaling. Induces the phosphorylation and activation of MAPK3/ERK1, MAPK1/ERK2 and AKT1, and ligand-dependent ERBB4 endocytosis is essential for the NRG1-mediated activation of these kinases in neurons. The polypeptide is Pro-neuregulin-1, membrane-bound isoform (Nrg1) (Rattus norvegicus (Rat)).